The sequence spans 325 residues: Secreted frizzled-related protein 3 (325 aa).

Residues 1–32 form the signal peptide; that stretch reads MVCGSPGGMLLLRAGLLALAALCLLRVPGARA. In terms of domain architecture, FZ spans 33 to 150; the sequence is AACEPVRIPL…VYDRGVCISP (118 aa). 5 disulfides stabilise this stretch: C35–C96, C43–C89, C80–C119, C108–C147, and C112–C136. An N-linked (GlcNAc...) asparagine glycan is attached at N49. An NTR domain is found at 178–298; it reads CKCKPIRATQ…WDMKLRHLGL (121 aa). Residues 297–325 are disordered; that stretch reads GLSKSDSSNSDSTQSQKSGRNSNPRQARN. The span at 299–314 shows a compositional bias: low complexity; it reads SKSDSSNSDSTQSQKS. Positions 315 to 325 are enriched in polar residues; sequence GRNSNPRQARN.

The protein belongs to the secreted frizzled-related protein (sFRP) family. Interacts with MYOC. Expressed primarily in the cartilaginous cores of the long bone during embryonic and fetal development and in the appendicular skeleton (6-13 weeks). At 13 weeks of gestation, transcripts were present in early chondroblasts of the tarsal bones of the foot, the carpal bones of the hands and the epiphysis of long bones. Highly expressed in placenta and heart, followed by brain, skeletal muscle, kidney and pancreas. Weakly expressed in lung and liver.

Its subcellular location is the secreted. Soluble frizzled-related proteins (sFRPS) function as modulators of Wnt signaling through direct interaction with Wnts. They have a role in regulating cell growth and differentiation in specific cell types. SFRP3/FRZB appears to be involved in limb skeletogenesis. Antagonist of Wnt8 signaling. Regulates chondrocyte maturation and long bone development. The chain is Secreted frizzled-related protein 3 (FRZB) from Homo sapiens (Human).